The chain runs to 203 residues: N-(5'-phosphoribosyl)anthranilate isomerase (203 aa).

Belongs to the TrpF family.

The enzyme catalyses N-(5-phospho-beta-D-ribosyl)anthranilate = 1-(2-carboxyphenylamino)-1-deoxy-D-ribulose 5-phosphate. It participates in amino-acid biosynthesis; L-tryptophan biosynthesis; L-tryptophan from chorismate: step 3/5. This is N-(5'-phosphoribosyl)anthranilate isomerase from Geotalea uraniireducens (strain Rf4) (Geobacter uraniireducens).